The chain runs to 276 residues: 4-hydroxy-3-methylbut-2-enyl diphosphate reductase (276 aa).

Cys12 is a [4Fe-4S] cluster binding site. Residues His36 and His71 each coordinate (2E)-4-hydroxy-3-methylbut-2-enyl diphosphate. Dimethylallyl diphosphate is bound by residues His36 and His71. The isopentenyl diphosphate site is built by His36 and His71. Cys93 serves as a coordination point for [4Fe-4S] cluster. His121 contributes to the (2E)-4-hydroxy-3-methylbut-2-enyl diphosphate binding site. His121 contributes to the dimethylallyl diphosphate binding site. His121 lines the isopentenyl diphosphate pocket. Glu123 functions as the Proton donor in the catalytic mechanism. Thr160 serves as a coordination point for (2E)-4-hydroxy-3-methylbut-2-enyl diphosphate. Position 188 (Cys188) interacts with [4Fe-4S] cluster. Ser216, Ser217, Asn218, and Ser259 together coordinate (2E)-4-hydroxy-3-methylbut-2-enyl diphosphate. Ser216, Ser217, Asn218, and Ser259 together coordinate dimethylallyl diphosphate. Residues Ser216, Ser217, Asn218, and Ser259 each contribute to the isopentenyl diphosphate site.

The protein belongs to the IspH family. The cofactor is [4Fe-4S] cluster.

It catalyses the reaction isopentenyl diphosphate + 2 oxidized [2Fe-2S]-[ferredoxin] + H2O = (2E)-4-hydroxy-3-methylbut-2-enyl diphosphate + 2 reduced [2Fe-2S]-[ferredoxin] + 2 H(+). The catalysed reaction is dimethylallyl diphosphate + 2 oxidized [2Fe-2S]-[ferredoxin] + H2O = (2E)-4-hydroxy-3-methylbut-2-enyl diphosphate + 2 reduced [2Fe-2S]-[ferredoxin] + 2 H(+). It functions in the pathway isoprenoid biosynthesis; dimethylallyl diphosphate biosynthesis; dimethylallyl diphosphate from (2E)-4-hydroxy-3-methylbutenyl diphosphate: step 1/1. Its pathway is isoprenoid biosynthesis; isopentenyl diphosphate biosynthesis via DXP pathway; isopentenyl diphosphate from 1-deoxy-D-xylulose 5-phosphate: step 6/6. Its function is as follows. Catalyzes the conversion of 1-hydroxy-2-methyl-2-(E)-butenyl 4-diphosphate (HMBPP) into a mixture of isopentenyl diphosphate (IPP) and dimethylallyl diphosphate (DMAPP). Acts in the terminal step of the DOXP/MEP pathway for isoprenoid precursor biosynthesis. In Nautilia profundicola (strain ATCC BAA-1463 / DSM 18972 / AmH), this protein is 4-hydroxy-3-methylbut-2-enyl diphosphate reductase.